The chain runs to 410 residues: 2-hydroxy-5-methyl-1-naphthoate 7-hydroxylase (410 aa).

Cysteine 350 contributes to the heme binding site.

It belongs to the cytochrome P450 family. Heme serves as cofactor.

It catalyses the reaction 2-hydroxy-5-methyl-1-naphthoate + 2 reduced [2Fe-2S]-[ferredoxin] + O2 + 2 H(+) = 2,7-dihydroxy-5-methyl-1-naphthoate + 2 oxidized [2Fe-2S]-[ferredoxin] + H2O. It functions in the pathway antibiotic biosynthesis. Its function is as follows. Involved in the biosynthesis of the naphthoic acid (NA) moiety in the chromophore of the enedyine antitumor antibiotic neocarzinostatin (NCS). Catalyzes the hydroxylation at C-7 position of 2-hydroxy-5-methyl-1-naphthoate to yield 2,7-dihydroxy-5-methyl-1-naphthoate. This chain is 2-hydroxy-5-methyl-1-naphthoate 7-hydroxylase, found in Streptomyces carzinostaticus.